Consider the following 465-residue polypeptide: Iron-sulfur cluster assembly SufBD family protein SERP0500 (465 aa).

The protein belongs to the iron-sulfur cluster assembly SufBD family.

This is Iron-sulfur cluster assembly SufBD family protein SERP0500 from Staphylococcus epidermidis (strain ATCC 35984 / DSM 28319 / BCRC 17069 / CCUG 31568 / BM 3577 / RP62A).